A 186-amino-acid polypeptide reads, in one-letter code: MGLKADNWIRKMALEHKMIEPFCEANIGKGVVSYGLSSYGYDICVGREFKIFTNVNSTVVDPKNFVEENVVDFEGDVCIVPANSFALARTIEYFKMPDDVLAICLGKSTYARCGIIVNVTPFEPGFEGHITIEISNTTPLPAKIYANEGIAQVLFLQGDEKCDTTYKDKKGKYQAQTGITLPRILK.

A dCTP-binding site is contributed by lysine 107–arginine 112. The Proton donor/acceptor role is filled by glutamate 133. Glutamine 152, tyrosine 166, and glutamine 176 together coordinate dCTP.

The protein belongs to the dCTP deaminase family. As to quaternary structure, homotrimer.

The enzyme catalyses dCTP + H2O + H(+) = dUTP + NH4(+). The protein operates within pyrimidine metabolism; dUMP biosynthesis; dUMP from dCTP (dUTP route): step 1/2. In terms of biological role, catalyzes the deamination of dCTP to dUTP. The chain is dCTP deaminase from Campylobacter jejuni subsp. doylei (strain ATCC BAA-1458 / RM4099 / 269.97).